The primary structure comprises 372 residues: N-acetyllactosaminide beta-1,3-N-acetylglucosaminyltransferase 3 (372 aa).

Over 1 to 10 the chain is Cytoplasmic; that stretch reads MKYLRHRRPN. A helical; Signal-anchor for type II membrane protein membrane pass occupies residues 11–31; sequence ATLILAIGAFTLLLFSLLVSP. Residues 32-372 lie on the Lumenal side of the membrane; the sequence is PTCKVQEQPP…LTCGNQTQIY (341 aa). Residues asparagine 64, asparagine 184, asparagine 202, asparagine 362, and asparagine 367 are each glycosylated (N-linked (GlcNAc...) asparagine).

It belongs to the glycosyltransferase 31 family. As to expression, expressed in colon, jejunum, stomach, esophagus, placenta and trachea.

It localises to the golgi apparatus membrane. It catalyses the reaction a 3-O-{beta-D-galactosyl-(1-&gt;3)-[N-acetyl-beta-D-glucosaminyl-(1-&gt;6)]-N-acetyl-alpha-D-galactosaminyl}-L-threonyl-[protein] + UDP-N-acetyl-alpha-D-glucosamine = 3-O-{beta-D-GlcNAc-(1-&gt;3)-beta-D-Gal-(1-&gt;3)-[beta-D-GlcNAc-(1-&gt;6)]-alpha-D-GalNAc}-L-threonyl-[protein] + UDP + H(+). The enzyme catalyses 3-O-{beta-D-galactosyl-(1-&gt;3)-[N-acetyl-beta-D-glucosaminyl-(1-&gt;6)]-N-acetyl-alpha-D-galactosaminyl}-L-seryl-[protein] + UDP-N-acetyl-alpha-D-glucosamine = 3-O-{beta-D-GlcNAc-(1-&gt;3)-beta-D-Gal-(1-&gt;3)-[beta-D-GlcNAc-(1-&gt;6)]-alpha-D-GalNAc}-L-seryl-[protein] + UDP + H(+). The catalysed reaction is a beta-D-galactosyl-(1-&gt;4)-N-acetyl-beta-D-glucosaminyl derivative + UDP-N-acetyl-alpha-D-glucosamine = an N-acetyl-beta-D-glucosaminyl-(1-&gt;3)-beta-D-galactosyl-(1-&gt;4)-N-acetyl-beta-D-glucosaminyl derivative + UDP + H(+). It participates in protein modification; protein glycosylation. Its function is as follows. Beta-1,3-N-acetylglucosaminyltransferase involved in the synthesis of poly-N-acetyllactosamine. Has activity for type 2 oligosaccharides. Also acts as a core1-1,3-N-acetylglucosaminyltransferase (Core1-beta3GlcNAcT) to form the 6-sulfo sialyl Lewis x on extended core1 O-glycans. The chain is N-acetyllactosaminide beta-1,3-N-acetylglucosaminyltransferase 3 (B3GNT3) from Homo sapiens (Human).